Reading from the N-terminus, the 361-residue chain is UDP-3-O-acylglucosamine N-acyltransferase (361 aa).

The active-site Proton acceptor is the histidine 253.

It belongs to the transferase hexapeptide repeat family. LpxD subfamily. As to quaternary structure, homotrimer.

It carries out the reaction a UDP-3-O-[(3R)-3-hydroxyacyl]-alpha-D-glucosamine + a (3R)-hydroxyacyl-[ACP] = a UDP-2-N,3-O-bis[(3R)-3-hydroxyacyl]-alpha-D-glucosamine + holo-[ACP] + H(+). It functions in the pathway bacterial outer membrane biogenesis; LPS lipid A biosynthesis. Functionally, catalyzes the N-acylation of UDP-3-O-acylglucosamine using 3-hydroxyacyl-ACP as the acyl donor. Is involved in the biosynthesis of lipid A, a phosphorylated glycolipid that anchors the lipopolysaccharide to the outer membrane of the cell. The protein is UDP-3-O-acylglucosamine N-acyltransferase of Burkholderia pseudomallei (strain 1710b).